A 523-amino-acid polypeptide reads, in one-letter code: 2-isopropylmalate synthase (523 aa).

Positions 5–267 (VIIFDTTLRD…HTNINHHEIW (263 aa)) constitute a Pyruvate carboxyltransferase domain. Mn(2+) contacts are provided by Asp-14, His-202, His-204, and Asn-238. A regulatory domain region spans residues 392-523 (RLDYFSVQSG…QNKENNKETV (132 aa)).

The protein belongs to the alpha-IPM synthase/homocitrate synthase family. LeuA type 1 subfamily. In terms of assembly, homodimer. Mn(2+) serves as cofactor.

Its subcellular location is the cytoplasm. It catalyses the reaction 3-methyl-2-oxobutanoate + acetyl-CoA + H2O = (2S)-2-isopropylmalate + CoA + H(+). It functions in the pathway amino-acid biosynthesis; L-leucine biosynthesis; L-leucine from 3-methyl-2-oxobutanoate: step 1/4. Functionally, catalyzes the condensation of the acetyl group of acetyl-CoA with 3-methyl-2-oxobutanoate (2-ketoisovalerate) to form 3-carboxy-3-hydroxy-4-methylpentanoate (2-isopropylmalate). This Salmonella agona (strain SL483) protein is 2-isopropylmalate synthase.